A 304-amino-acid chain; its full sequence is N-acetylmuramic acid 6-phosphate etherase (304 aa).

One can recognise an SIS domain in the interval 62-225; that stretch reads IVQAFQNGGR…TTASMVMIGK (164 aa). The Proton donor role is filled by Glu-90. Glu-121 is an active-site residue.

The protein belongs to the GCKR-like family. MurNAc-6-P etherase subfamily. Homodimer.

The catalysed reaction is N-acetyl-D-muramate 6-phosphate + H2O = N-acetyl-D-glucosamine 6-phosphate + (R)-lactate. The protein operates within amino-sugar metabolism; 1,6-anhydro-N-acetylmuramate degradation. It functions in the pathway amino-sugar metabolism; N-acetylmuramate degradation. Its pathway is cell wall biogenesis; peptidoglycan recycling. Specifically catalyzes the cleavage of the D-lactyl ether substituent of MurNAc 6-phosphate, producing GlcNAc 6-phosphate and D-lactate. Together with AnmK, is also required for the utilization of anhydro-N-acetylmuramic acid (anhMurNAc) either imported from the medium or derived from its own cell wall murein, and thus plays a role in cell wall recycling. The sequence is that of N-acetylmuramic acid 6-phosphate etherase from Actinobacillus pleuropneumoniae serotype 5b (strain L20).